Here is a 203-residue protein sequence, read N- to C-terminus: Thymidylate kinase (203 aa).

Gly14–Ser21 contributes to the ATP binding site.

Belongs to the thymidylate kinase family.

It catalyses the reaction dTMP + ATP = dTDP + ADP. Functionally, phosphorylation of dTMP to form dTDP in both de novo and salvage pathways of dTTP synthesis. This Rickettsia canadensis (strain McKiel) protein is Thymidylate kinase.